The sequence spans 94 residues: Aspartyl/glutamyl-tRNA(Asn/Gln) amidotransferase subunit C (94 aa).

This sequence belongs to the GatC family. Heterotrimer of A, B and C subunits.

The catalysed reaction is L-glutamyl-tRNA(Gln) + L-glutamine + ATP + H2O = L-glutaminyl-tRNA(Gln) + L-glutamate + ADP + phosphate + H(+). It catalyses the reaction L-aspartyl-tRNA(Asn) + L-glutamine + ATP + H2O = L-asparaginyl-tRNA(Asn) + L-glutamate + ADP + phosphate + 2 H(+). Allows the formation of correctly charged Asn-tRNA(Asn) or Gln-tRNA(Gln) through the transamidation of misacylated Asp-tRNA(Asn) or Glu-tRNA(Gln) in organisms which lack either or both of asparaginyl-tRNA or glutaminyl-tRNA synthetases. The reaction takes place in the presence of glutamine and ATP through an activated phospho-Asp-tRNA(Asn) or phospho-Glu-tRNA(Gln). The protein is Aspartyl/glutamyl-tRNA(Asn/Gln) amidotransferase subunit C of Opitutus terrae (strain DSM 11246 / JCM 15787 / PB90-1).